The chain runs to 300 residues: 4-hydroxy-tetrahydrodipicolinate synthase (300 aa).

Residue Thr45 participates in pyruvate binding. The active-site Proton donor/acceptor is Tyr140. The Schiff-base intermediate with substrate role is filled by Lys169. Ile210 contacts pyruvate.

Belongs to the DapA family. As to quaternary structure, homotetramer; dimer of dimers.

Its subcellular location is the cytoplasm. It carries out the reaction L-aspartate 4-semialdehyde + pyruvate = (2S,4S)-4-hydroxy-2,3,4,5-tetrahydrodipicolinate + H2O + H(+). It participates in amino-acid biosynthesis; L-lysine biosynthesis via DAP pathway; (S)-tetrahydrodipicolinate from L-aspartate: step 3/4. In terms of biological role, catalyzes the condensation of (S)-aspartate-beta-semialdehyde [(S)-ASA] and pyruvate to 4-hydroxy-tetrahydrodipicolinate (HTPA). The chain is 4-hydroxy-tetrahydrodipicolinate synthase from Helicobacter pylori (strain Shi470).